A 108-amino-acid polypeptide reads, in one-letter code: MALLVHFLPLLALLALWEPKPTQAFVKQHLCGPHLVEALYLVCGERGFFYTPKSRREVEDPQVEQLELGGSPGDLQTLALEVARQKRGIVDQCCTSICSLYQLENYCN.

The signal sequence occupies residues 1–24; it reads MALLVHFLPLLALLALWEPKPTQA. Intrachain disulfides connect Cys31/Cys94, Cys43/Cys107, and Cys93/Cys98. The propeptide at 57-85 is c peptide; sequence EVEDPQVEQLELGGSPGDLQTLALEVARQ.

The protein belongs to the insulin family. Heterodimer of a B chain and an A chain linked by two disulfide bonds.

The protein localises to the secreted. Insulin decreases blood glucose concentration. It increases cell permeability to monosaccharides, amino acids and fatty acids. It accelerates glycolysis, the pentose phosphate cycle, and glycogen synthesis in liver. In Mus musculus (Mouse), this protein is Insulin-1 (Ins1).